Consider the following 397-residue polypeptide: Phosphoglycerate kinase (397 aa).

Substrate-binding positions include 25–27, R41, 64–67, R118, and R151; these read DLN and HLGR. Residues K202, E324, and 350–353 contribute to the ATP site; that span reads GGDT.

It belongs to the phosphoglycerate kinase family. Monomer.

It localises to the cytoplasm. The catalysed reaction is (2R)-3-phosphoglycerate + ATP = (2R)-3-phospho-glyceroyl phosphate + ADP. The protein operates within carbohydrate degradation; glycolysis; pyruvate from D-glyceraldehyde 3-phosphate: step 2/5. The chain is Phosphoglycerate kinase from Acidovorax sp. (strain JS42).